A 92-amino-acid polypeptide reads, in one-letter code: Muconolactone Delta-isomerase (92 aa).

The protein belongs to the muconolactone Delta-isomerase family. Homodecamer.

The catalysed reaction is (S)-muconolactone = (4,5-dihydro-5-oxofuran-2-yl)-acetate. The protein operates within aromatic compound metabolism; beta-ketoadipate pathway; 5-oxo-4,5-dihydro-2-furylacetate from catechol: step 3/3. The sequence is that of Muconolactone Delta-isomerase (catC) from Cupriavidus pinatubonensis (strain JMP 134 / LMG 1197) (Cupriavidus necator (strain JMP 134)).